Here is a 418-residue protein sequence, read N- to C-terminus: S-adenosylmethionine synthase (418 aa).

His-16 is an ATP binding site. Asp-18 is a binding site for Mg(2+). Residue Glu-44 participates in K(+) binding. L-methionine is bound by residues Glu-57 and Gln-100. Residues 100-110 (QSPDISQGVTK) are flexible loop. ATP is bound by residues 175-177 (DGK), 251-252 (KF), Asp-260, 266-267 (RK), Ala-283, and Lys-287. Asp-260 contributes to the L-methionine binding site. Lys-291 serves as a coordination point for L-methionine.

This sequence belongs to the AdoMet synthase family. As to quaternary structure, homotetramer; dimer of dimers. Mg(2+) is required as a cofactor. Requires K(+) as cofactor.

The protein localises to the cytoplasm. It carries out the reaction L-methionine + ATP + H2O = S-adenosyl-L-methionine + phosphate + diphosphate. Its pathway is amino-acid biosynthesis; S-adenosyl-L-methionine biosynthesis; S-adenosyl-L-methionine from L-methionine: step 1/1. Catalyzes the formation of S-adenosylmethionine (AdoMet) from methionine and ATP. The overall synthetic reaction is composed of two sequential steps, AdoMet formation and the subsequent tripolyphosphate hydrolysis which occurs prior to release of AdoMet from the enzyme. This is S-adenosylmethionine synthase from Gloeothece citriformis (strain PCC 7424) (Cyanothece sp. (strain PCC 7424)).